A 396-amino-acid chain; its full sequence is Aspartic protease 1 (396 aa).

Residues M1 to A15 form the signal peptide. The region spanning Y68 to A389 is the Peptidase A1 domain. The N-linked (GlcNAc...) asparagine glycan is linked to N71. Residue D86 is part of the active site. A disulfide bridge connects residues C99 and C104. Residue D278 is part of the active site. C313 and C349 are disulfide-bonded.

This sequence belongs to the peptidase A1 family. As to quaternary structure, interacts with B.thuringiensis endotoxin Cry6Aa; the interaction prevents Cry6Aa proteolysis by host gut proteases.

The protein localises to the cytoplasm. It is found in the lysosome. Its subcellular location is the secreted. Aspartic protease, which is part of the necrosis cell death pathway. Promotes B.thuringiensis Cry6Aa stability by preventing its proteolysis by host gut proteases. Required for Cry6Aa-induced necrotic death of intestinal cells. Cry6Aa uptake into the host intestinal cells triggers an increase in intracellular Ca(2+) levels leading to lysosome rupture and to the subsequent release of asp-1 which leads to necrosis. The polypeptide is Aspartic protease 1 (Caenorhabditis elegans).